The sequence spans 84 residues: Toxin Ts4 (84 aa).

Residues 1-19 form the signal peptide; it reads MKRMILFISCLLLIDIVVG. The 62-residue stretch at 21-82 folds into the LCN-type CS-alpha/beta domain; it reads REGYPADSKG…IWTSETNKCG (62 aa). Disulfide bonds link cysteine 31–cysteine 81, cysteine 35–cysteine 57, cysteine 43–cysteine 62, and cysteine 47–cysteine 64. Position 81 is a cysteine amide (cysteine 81). Residues 82–84 constitute a propeptide that is removed on maturation; the sequence is GKK.

This sequence belongs to the long (4 C-C) scorpion toxin superfamily. Sodium channel inhibitor family. Alpha subfamily. Expressed by the venom gland.

The protein localises to the secreted. In terms of biological role, not toxic. Induces an immune response similar to that induced by whole venom. Induces a dose dependent release of the neurotransmitters glutamic acid and gamma aminobutyric acid from rat brain synaptosomes. Thus, polyclonal antibodies raised against this protein can neutralize the effects of the venom. The sequence is that of Toxin Ts4 from Tityus serrulatus (Brazilian scorpion).